A 590-amino-acid polypeptide reads, in one-letter code: Putative ABC transporter ATP-binding protein MM_3016 (590 aa).

ABC transporter domains are found at residues 11-251 (VRFE…KLGI) and 317-550 (VRIE…AGLI). ATP contacts are provided by residues 45-52 (GPSGCGKS) and 350-357 (GHNGAGKT).

Belongs to the ABC transporter superfamily.

It is found in the cell membrane. Its function is as follows. Probably part of an ABC transporter complex. Responsible for energy coupling to the transport system. The sequence is that of Putative ABC transporter ATP-binding protein MM_3016 from Methanosarcina mazei (strain ATCC BAA-159 / DSM 3647 / Goe1 / Go1 / JCM 11833 / OCM 88) (Methanosarcina frisia).